The primary structure comprises 116 residues: NADH-ubiquinone oxidoreductase chain 3 (116 aa).

3 helical membrane-spanning segments follow: residues 4-24 (LIIT…IAFW), 56-76 (FFLI…LLPL), and 88-108 (TLIL…YEWI).

This sequence belongs to the complex I subunit 3 family. In terms of assembly, core subunit of respiratory chain NADH dehydrogenase (Complex I) which is composed of 45 different subunits. Interacts with TMEM186. Interacts with TMEM242.

Its subcellular location is the mitochondrion inner membrane. The catalysed reaction is a ubiquinone + NADH + 5 H(+)(in) = a ubiquinol + NAD(+) + 4 H(+)(out). Functionally, core subunit of the mitochondrial membrane respiratory chain NADH dehydrogenase (Complex I) which catalyzes electron transfer from NADH through the respiratory chain, using ubiquinone as an electron acceptor. Essential for the catalytic activity of complex I. This chain is NADH-ubiquinone oxidoreductase chain 3, found in Osphranter robustus (Wallaroo).